We begin with the raw amino-acid sequence, 99 residues long: Aspartyl/glutamyl-tRNA(Asn/Gln) amidotransferase subunit C (99 aa).

It belongs to the GatC family. In terms of assembly, heterotrimer of A, B and C subunits.

The enzyme catalyses L-glutamyl-tRNA(Gln) + L-glutamine + ATP + H2O = L-glutaminyl-tRNA(Gln) + L-glutamate + ADP + phosphate + H(+). It carries out the reaction L-aspartyl-tRNA(Asn) + L-glutamine + ATP + H2O = L-asparaginyl-tRNA(Asn) + L-glutamate + ADP + phosphate + 2 H(+). Functionally, allows the formation of correctly charged Asn-tRNA(Asn) or Gln-tRNA(Gln) through the transamidation of misacylated Asp-tRNA(Asn) or Glu-tRNA(Gln) in organisms which lack either or both of asparaginyl-tRNA or glutaminyl-tRNA synthetases. The reaction takes place in the presence of glutamine and ATP through an activated phospho-Asp-tRNA(Asn) or phospho-Glu-tRNA(Gln). This chain is Aspartyl/glutamyl-tRNA(Asn/Gln) amidotransferase subunit C, found in Burkholderia ambifaria (strain MC40-6).